We begin with the raw amino-acid sequence, 934 residues long: Protein unc-45 homolog B (934 aa).

TPR repeat units lie at residues 9-42 (SVQL…CKKE), 48-81 (AVIY…DAAD), and 83-115 (KALY…EPKN). ARM repeat units lie at residues 174–213 (DAGA…GMCT), 216–255 (RARA…CVND), and 753–792 (DKLR…NLVC).

In terms of assembly, interacts with apobec2a, apobec2b, hsp90a.1, hsp90a.2, hsp90ab1 and myosin. In terms of tissue distribution, expressed in striated muscle tissue including somites, heart and craniofacial muscle. Detected in mesoderm adjacent to the dorsal midline during the late gastrula stages and in somitic mesoderm during development of trunk skeletal muscle. Also expressed in cranial skeletal muscle and in cardiac and smooth muscle. Detected in somitic muscle and heart primordium of 24 hour embryos. At later stages, expressed in muscles of pectoral fins, jaw, branchial arches and eye.

It is found in the cytoplasm. It localises to the myofibril. The protein localises to the sarcomere. Its subcellular location is the z line. The protein resides in the a band. It is found in the perinuclear region. Functionally, acts as a co-chaperone for HSP90 and is required for proper folding of the myosin motor domain. Plays a role in sarcomere formation during muscle cell development. Required for myoseptal integrity, myofiber attachment, motility and craniofacial development. Is necessary for normal early lens development. The sequence is that of Protein unc-45 homolog B from Danio rerio (Zebrafish).